Consider the following 596-residue polypeptide: Nuclear receptor subfamily 2 group C member 2 (596 aa).

Ser19 is modified (phosphoserine; by MAPK). Phosphoserine is present on Ser46. Ser55 and Ser68 each carry phosphoserine; by MAPK. Phosphoserine is present on Ser98. Residues 114–189 (VEYCVVCGDK…MGMKMESVQS (76 aa)) constitute a DNA-binding region (nuclear receptor). 2 consecutive NR C4-type zinc fingers follow at residues 117–137 (CVVC…CEGC) and 153–177 (CRSS…LKKC). Residue Lys192 forms a Glycyl lysine isopeptide (Lys-Gly) (interchain with G-Cter in SUMO2) linkage. At Ser219 the chain carries Phosphoserine. At Lys231 the chain carries N6-acetyllysine. One can recognise an NR LBD domain in the interval 341–583 (GSIHVISRDQ…SIIPYILKME (243 aa)).

This sequence belongs to the nuclear hormone receptor family. NR2 subfamily. As to quaternary structure, homodimer; can bind DNA as homodimer. Heterodimer; binds DNA as a heterodimer with NR2C1 required for chromatin remodeling and for binding to promoter regions such as globin DR1 repeats. Interacts with NR2C2AP; the interaction represses selective NR2C2-mediated transcriptional activity. Interacts with PCAF; the interaction preferentially occurs on the non-phosphorylated form and induces NR2C2-mediated transactivation activity and does not require the ligand-binding domain. Interacts (MAPK-mediated phosphorylated form) with NRIP1; the interaction promotes repression of NR2C2-mediated activity. Interacts with NLRP10. Interacts (via ligand-binding region) with transcriptional corepressor JAZF1; the interaction promotes NR2C2-mediated transcriptional repression. Post-translationally, phosphorylation on Ser-19 and Ser-68 is an important regulator of NR2C2-mediated transcriptional activity. Phosphorylation on these residues recruits the corepressor, NRIP1, leading to transcripional repression, whereas the non-phosphorylated form preferentially recruits the coactivator, PCAF. As to expression, expressed, during embryogenesis, in perichondrium, developing glomeruli structures and tubules of kidney, as well as in intestiinal villi. Also expressed in lung and hair follicles.

It localises to the nucleus. Its function is as follows. Orphan nuclear receptor that can act as a repressor or activator of transcription. An important repressor of nuclear receptor signaling pathways such as retinoic acid receptor, retinoid X, vitamin D3 receptor, thyroid hormone receptor and estrogen receptor pathways. May regulate gene expression during the late phase of spermatogenesis. Activates transcriptional activity of LHCG and is antagonist of PPARA-mediated transactivation. Together with NR2C1, forms the core of the DRED (direct repeat erythroid-definitive) complex that represses embryonic and fetal globin transcription including that of GATA1. Binds to hormone response elements (HREs) consisting of two 5'-AGGTCA-3' half site direct repeat consensus sequences. Plays a fundamental role in early embryonic development and embryonic stem cells. Required for normal spermatogenesis and cerebellum development. Appears to be important for neurodevelopmentally regulated behavior. The chain is Nuclear receptor subfamily 2 group C member 2 (Nr2c2) from Mus musculus (Mouse).